The chain runs to 157 residues: Peptide methionine sulfoxide reductase MsrA (157 aa).

Residue Cys10 is part of the active site.

Belongs to the MsrA Met sulfoxide reductase family.

It carries out the reaction L-methionyl-[protein] + [thioredoxin]-disulfide + H2O = L-methionyl-(S)-S-oxide-[protein] + [thioredoxin]-dithiol. The enzyme catalyses [thioredoxin]-disulfide + L-methionine + H2O = L-methionine (S)-S-oxide + [thioredoxin]-dithiol. Its function is as follows. Has an important function as a repair enzyme for proteins that have been inactivated by oxidation. Catalyzes the reversible oxidation-reduction of methionine sulfoxide in proteins to methionine. This is Peptide methionine sulfoxide reductase MsrA from Clostridium botulinum (strain Hall / ATCC 3502 / NCTC 13319 / Type A).